The primary structure comprises 380 residues: MSTPRVMVGVSGGVDSSVAAWRLVQQGEAVAGLFMQNWADDGSGDCRAEDDRRDAVAVCGLLGIPFHFRDFSSEYWQGVFEHFLAEYAAGRTPNPDVLCNREVKFKHFLDAARELGAERIATGHYARVTQRGHQWLLLRGADRSKDQSYFLHQLGQEQLAATLFPIGDLEKTDLRRIARDVSLPTHAKKDSTGICFIGERDFREFLGRYLPAKPGQILDPADGSVIAEHPGVFYFTLGQREGLNIGGVRGRPAAPWYVVGKDVASNVLYVDQDRDSKWMLSERLRSETAHWIAGSPPARRFECTAQTRYRQPDEPCTVQVLDDGSVLVTFARPQRAVTPGQSLVLYDGDVCLGGAVIAATDAPLEQRLRTTPSPFEVIAA.

ATP contacts are provided by residues 9–16 (GVSGGVDS) and methionine 35. The interval 94–96 (NPD) is interaction with target base in tRNA. The active-site Nucleophile is cysteine 99. Residues cysteine 99 and cysteine 195 are joined by a disulfide bond. Glycine 123 is a binding site for ATP. Residues 145–147 (KDQ) form an interaction with tRNA region. Catalysis depends on cysteine 195, which acts as the Cysteine persulfide intermediate. The segment at 308 to 309 (RY) is interaction with tRNA.

The protein belongs to the MnmA/TRMU family.

The protein resides in the cytoplasm. The catalysed reaction is S-sulfanyl-L-cysteinyl-[protein] + uridine(34) in tRNA + AH2 + ATP = 2-thiouridine(34) in tRNA + L-cysteinyl-[protein] + A + AMP + diphosphate + H(+). In terms of biological role, catalyzes the 2-thiolation of uridine at the wobble position (U34) of tRNA, leading to the formation of s(2)U34. The sequence is that of tRNA-specific 2-thiouridylase MnmA from Stenotrophomonas maltophilia (strain K279a).